We begin with the raw amino-acid sequence, 517 residues long: GMP synthase [glutamine-hydrolyzing] (517 aa).

Residues 11 to 202 (KIIALDFGSQ…AFDVCGAKAN (192 aa)) enclose the Glutamine amidotransferase type-1 domain. Cys88 (nucleophile) is an active-site residue. Catalysis depends on residues His176 and Glu178. The GMPS ATP-PPase domain occupies 203–392 (WTMDDFIDMQ…LGIPHELVWR (190 aa)). 230–236 (SGGVDSS) contacts ATP.

Homodimer.

The enzyme catalyses XMP + L-glutamine + ATP + H2O = GMP + L-glutamate + AMP + diphosphate + 2 H(+). Its pathway is purine metabolism; GMP biosynthesis; GMP from XMP (L-Gln route): step 1/1. Its function is as follows. Catalyzes the synthesis of GMP from XMP. The sequence is that of GMP synthase [glutamine-hydrolyzing] from Limosilactobacillus reuteri (strain DSM 20016) (Lactobacillus reuteri).